A 224-amino-acid chain; its full sequence is Ribonuclease HII (224 aa).

The RNase H type-2 domain occupies 1-210 (MKLGGIDEAG…LKKIEEKLQK (210 aa)). A divalent metal cation contacts are provided by aspartate 7, glutamate 8, and aspartate 105.

This sequence belongs to the RNase HII family. The cofactor is Mn(2+). Requires Mg(2+) as cofactor.

It is found in the cytoplasm. It catalyses the reaction Endonucleolytic cleavage to 5'-phosphomonoester.. Its function is as follows. Endonuclease that specifically degrades the RNA of RNA-DNA hybrids. The chain is Ribonuclease HII from Thermococcus sibiricus (strain DSM 12597 / MM 739).